A 306-amino-acid chain; its full sequence is D-alanine--D-alanine ligase (306 aa).

Catalysis depends on residues E15 and S150. One can recognise an ATP-grasp domain in the interval 101-303 (KLLWKSLSLR…FDELILKILK (203 aa)). An ATP-binding site is contributed by 134 to 189 (ILKLKFPVVIKPNNAGSSIGITIVNHPDLLIDSINLAFNYSNNIIIEKFLKGTEYT). D257, E270, and N272 together coordinate Mg(2+). Residue S281 is part of the active site.

This sequence belongs to the D-alanine--D-alanine ligase family. Mg(2+) is required as a cofactor. The cofactor is Mn(2+).

It is found in the cytoplasm. The catalysed reaction is 2 D-alanine + ATP = D-alanyl-D-alanine + ADP + phosphate + H(+). The protein operates within cell wall biogenesis; peptidoglycan biosynthesis. Functionally, cell wall formation. The protein is D-alanine--D-alanine ligase of Buchnera aphidicola subsp. Schizaphis graminum (strain Sg).